The chain runs to 1657 residues: Alsin (1657 aa).

RCC1 repeat units lie at residues 60–109 (GEVY…VTDN), 110–168 (GVAY…LSIS), and 169–219 (REIW…LVQC). The segment at 432–481 (TGAQAGSSAIGPEGLKDSREEQVKQESMQGKKSSSLVDIREEETEGGSRR) is disordered. A compositionally biased stretch (basic and acidic residues) spans 445-455 (GLKDSREEQVK). A compositionally biased stretch (polar residues) spans 456–467 (QESMQGKKSSSL). A phosphoserine mark is found at Ser465, Ser466, Ser483, and Ser492. Thr510 carries the phosphothreonine modification. RCC1 repeat units lie at residues 526–577 (TEVW…LTAK) and 578–628 (SQVY…LVDT). Lys533 carries the post-translational modification N6-acetyllysine. The region spanning 690-885 (GYIASLHELA…ECLALHLGRK (196 aa)) is the DH domain. The PH domain maps to 901–1007 (GKMTDSLRKP…RAISQAVDQA (107 aa)). MORN repeat units lie at residues 1049 to 1071 (YDGR…DGKM), 1072 to 1094 (YSGM…NKAM), 1100 to 1122 (YVGH…SGEV), 1123 to 1145 (FEGC…KLTS), 1151 to 1173 (FIGQ…TRGE), 1175 to 1197 (YMGM…FGLY), 1198 to 1220 (YEGN…DDTI), and 1221 to 1244 (YEGE…NGDY). Ser1335 is modified (phosphoserine). Residues 1513-1657 (KQPDIALLGF…YYQIQREKLN (145 aa)) enclose the VPS9 domain.

As to quaternary structure, forms a heteromeric complex with ALS2CL. Interacts with ALS2CL.

May act as a GTPase regulator. Controls survival and growth of spinal motoneurons. This is Alsin (ALS2) from Pan troglodytes (Chimpanzee).